A 146-amino-acid polypeptide reads, in one-letter code: VHWTAEEKQLITGLWGKVNVADCGAEALARLLIVYPWTQRFFASFGNLSSPTAIIGNPMVRAHGKKVLTSFGEAVKNLDNIKNTFAQLSELHCDKLHVDPENFRLLGDILIIVLAAHFGKDFSPDCQAAWQKLVRAVAHALARKYH.

In terms of domain architecture, Globin spans 2–146 (HWTAEEKQLI…VAHALARKYH (145 aa)). Positions 63 and 92 each coordinate heme b.

This sequence belongs to the globin family. As to quaternary structure, heterotetramer of two alpha chains and two beta chains. Red blood cells.

Functionally, involved in oxygen transport from the lung to the various peripheral tissues. The protein is Hemoglobin subunit beta (HBB) of Aegypius monachus (Cinereous vulture).